Here is a 445-residue protein sequence, read N- to C-terminus: Histidinol dehydrogenase (445 aa).

NAD(+) contacts are provided by Tyr-138, Gln-199, and Asn-222. Ser-245, Gln-267, and His-270 together coordinate substrate. Residues Gln-267 and His-270 each coordinate Zn(2+). Active-site proton acceptor residues include Glu-335 and His-336. Residues His-336, Asp-369, Glu-423, and His-428 each contribute to the substrate site. Residue Asp-369 participates in Zn(2+) binding. His-428 contacts Zn(2+).

The protein belongs to the histidinol dehydrogenase family. It depends on Zn(2+) as a cofactor.

The catalysed reaction is L-histidinol + 2 NAD(+) + H2O = L-histidine + 2 NADH + 3 H(+). It participates in amino-acid biosynthesis; L-histidine biosynthesis; L-histidine from 5-phospho-alpha-D-ribose 1-diphosphate: step 9/9. In terms of biological role, catalyzes the sequential NAD-dependent oxidations of L-histidinol to L-histidinaldehyde and then to L-histidine. This chain is Histidinol dehydrogenase, found in Burkholderia pseudomallei (strain 1710b).